Consider the following 394-residue polypeptide: Elongation factor Tu 2 (394 aa).

The 195-residue stretch at Lys10–Ala204 folds into the tr-type G domain. The tract at residues Gly19–Thr26 is G1. Gly19–Thr26 is a GTP binding site. Thr26 serves as a coordination point for Mg(2+). Positions Gly60–Asn64 are G2. The G3 stretch occupies residues Asp81 to Gly84. GTP is bound by residues Asp81–His85 and Asn136–Asp139. Positions Asn136–Asp139 are G4. The interval Ser174–Leu176 is G5.

This sequence belongs to the TRAFAC class translation factor GTPase superfamily. Classic translation factor GTPase family. EF-Tu/EF-1A subfamily. As to quaternary structure, monomer.

The protein resides in the cytoplasm. The catalysed reaction is GTP + H2O = GDP + phosphate + H(+). Its function is as follows. GTP hydrolase that promotes the GTP-dependent binding of aminoacyl-tRNA to the A-site of ribosomes during protein biosynthesis. The sequence is that of Elongation factor Tu 2 from Shewanella frigidimarina (strain NCIMB 400).